The following is a 227-amino-acid chain: 2-C-methyl-D-erythritol 4-phosphate cytidylyltransferase (227 aa).

This sequence belongs to the IspD/TarI cytidylyltransferase family. IspD subfamily.

It catalyses the reaction 2-C-methyl-D-erythritol 4-phosphate + CTP + H(+) = 4-CDP-2-C-methyl-D-erythritol + diphosphate. The protein operates within isoprenoid biosynthesis; isopentenyl diphosphate biosynthesis via DXP pathway; isopentenyl diphosphate from 1-deoxy-D-xylulose 5-phosphate: step 2/6. Its function is as follows. Catalyzes the formation of 4-diphosphocytidyl-2-C-methyl-D-erythritol from CTP and 2-C-methyl-D-erythritol 4-phosphate (MEP). This chain is 2-C-methyl-D-erythritol 4-phosphate cytidylyltransferase, found in Tolumonas auensis (strain DSM 9187 / NBRC 110442 / TA 4).